Consider the following 339-residue polypeptide: Alcohol dehydrogenase notN (339 aa).

Zn(2+) is bound by residues cysteine 44, histidine 65, glutamate 66, cysteine 99, cysteine 102, cysteine 110, and cysteine 152. Position 65 (histidine 65) interacts with an alcohol. Residues 176 to 181, 196 to 201, lysine 204, 263 to 265, 287 to 289, and 295 to 297 each bind NAD(+); these read GLGGLG, VAISRG, LSF, PSG, and EDA.

It belongs to the zinc-containing alcohol dehydrogenase family. The cofactor is Zn(2+).

The catalysed reaction is a primary alcohol + NAD(+) = an aldehyde + NADH + H(+). It catalyses the reaction a secondary alcohol + NAD(+) = a ketone + NADH + H(+). Its function is as follows. Alcohol dehydrogenase; part of the gene cluster that mediates the biosynthesis of notoamide, a fungal indole alkaloid that belongs to a family of natural products containing a characteristic bicyclo[2.2.2]diazaoctane core. The first step of notoamide biosynthesis involves coupling of L-proline and L-tryptophan by the bimodular NRPS notE, to produce cyclo-L-tryptophan-L-proline called brevianamide F. The reverse prenyltransferase notF then acts as a deoxybrevianamide E synthase and converts brevianamide F to deoxybrevianamide E via reverse prenylation at C-2 of the indole ring leading to the bicyclo[2.2.2]diazaoctane core. Deoxybrevianamide E is further hydroxylated at C-6 of the indole ring, likely catalyzed by the cytochrome P450 monooxygenase notG, to yield 6-hydroxy-deoxybrevianamide E. 6-hydroxy-deoxybrevianamide E is a specific substrate of the prenyltransferase notC for normal prenylation at C-7 to produce 6-hydroxy-7-prenyl-deoxybrevianamide, also called notoamide S. As the proposed pivotal branching point in notoamide biosynthesis, notoamide S can be diverted to notoamide E through an oxidative pyran ring closure putatively catalyzed by either notH cytochrome P450 monooxygenase or the notD FAD-linked oxidoreductase. This step would be followed by an indole 2,3-epoxidation-initiated pinacol-like rearrangement catalyzed by the notB FAD-dependent monooxygenase leading to the formation of notoamide C and notoamide D. On the other hand notoamide S is converted to notoamide T by notH (or notD), a bifunctional oxidase that also functions as the intramolecular Diels-Alderase responsible for generation of (+)-notoamide T. To generate antipodal (-)-notoaminide T, notH' (or notD') in Aspergillus versicolor is expected to catalyze a Diels-Alder reaction leading to the opposite stereochemistry. The remaining oxidoreductase notD (or notH) likely catalyzes the oxidative pyran ring formation to yield (+)-stephacidin A. The FAD-dependent monooxygenase notI is highly similar to notB and is predicted to catalyze a similar conversion from (+)-stephacidin A to (-)-notoamide B via the 2,3-epoxidation of (+)-stephacidin A followed by a pinacol-type rearrangement. Finally, it remains unclear which enzyme could be responsible for the final hydroxylation steps leading to notoamide A and sclerotiamide. The function of notN in the notoamide biosynthesis has not been determined yet. The chain is Alcohol dehydrogenase notN from Aspergillus sp. (strain MF297-2).